A 270-amino-acid polypeptide reads, in one-letter code: Glucosamine-6-phosphate deaminase (270 aa).

Asp-72 acts as the Proton acceptor; for enolization step in catalysis. Asp-141 acts as the For ring-opening step in catalysis. Residue His-143 is the Proton acceptor; for ring-opening step of the active site. Glu-148 acts as the For ring-opening step in catalysis.

The protein belongs to the glucosamine/galactosamine-6-phosphate isomerase family. NagB subfamily.

The catalysed reaction is alpha-D-glucosamine 6-phosphate + H2O = beta-D-fructose 6-phosphate + NH4(+). Its pathway is amino-sugar metabolism; N-acetylneuraminate degradation; D-fructose 6-phosphate from N-acetylneuraminate: step 5/5. With respect to regulation, allosterically activated by N-acetylglucosamine 6-phosphate (GlcNAc6P). In terms of biological role, catalyzes the reversible isomerization-deamination of glucosamine 6-phosphate (GlcN6P) to form fructose 6-phosphate (Fru6P) and ammonium ion. The polypeptide is Glucosamine-6-phosphate deaminase (Parabacteroides distasonis (strain ATCC 8503 / DSM 20701 / CIP 104284 / JCM 5825 / NCTC 11152)).